Here is a 727-residue protein sequence, read N- to C-terminus: Capsid protein VP1 (727 aa).

Positions 1-10 are enriched in basic residues; that stretch reads MAPPAKRARR. 2 disordered regions span residues 1–38 and 95–184; these read MAPP…SDAA and VLTD…VGIS. The short motif at 4–13 is the Nuclear localization signal element; sequence PAKRARRGLV. A phospholipase A2-like region spans residues 19 to 64; it reads YLGPGNSLDQGEPTNPSDAAAKEHDEAYAAYLRSGKNPYLYFSPAD. Residues 25 to 35 show a composition bias toward polar residues; that stretch reads SLDQGEPTNPS. A compositionally biased stretch (gly residues) spans 166–183; it reads SGNGSGGGGGGGSGGVGI. Residue asparagine 323 coordinates Mg(2+). The disordered stretch occupies residues 507–536; that stretch reads AQTDENQAADGDPRYAFGRQHGQKTTTTGE. Cysteine 633 and cysteine 637 are disulfide-bonded.

The protein belongs to the parvoviridae capsid protein family. As to quaternary structure, interacts with host TFRC.

Its subcellular location is the virion. The protein localises to the host nucleus. Its function is as follows. Capsid protein self-assembles to form an icosahedral capsid with a T=1 symmetry, about 22 nm in diameter, and consisting of 60 copies of two size variants of the capsid proteins, VP1 and VP2, which differ by the presence of an N-terminal extension in the minor protein VP1. The capsid encapsulates the genomic ssDNA. Capsid proteins are responsible for the attachment to host cell receptor TFRC. This attachment induces virion internalization predominantly through clathrin-dependent endocytosis. Binding to the host receptors also induces capsid rearrangements leading to surface exposure of VP1 N-terminus. This chain is Capsid protein VP1, found in Feline panleukopenia virus (FPV).